The chain runs to 124 residues: SVAKSAQFPLHVWLPDAMEGPTPISALIHAATMVAAGIFLVARLLPLFIVIPSIMTGIALIGIITVVLGATLAIAQKDIKKNLAYSTMSQLGYMMLALGMGSYRAALFHLITHAYSKALLFLGS.

The next 3 membrane-spanning stretches (helical) occupy residues Thr22 to Ala42, Leu44 to Ile64, and Leu91 to Ile111.

It belongs to the complex I subunit 5 family. As to quaternary structure, NDH is composed of at least 16 different subunits, 5 of which are encoded in the nucleus.

It is found in the plastid. It localises to the chloroplast thylakoid membrane. The enzyme catalyses a plastoquinone + NADH + (n+1) H(+)(in) = a plastoquinol + NAD(+) + n H(+)(out). The catalysed reaction is a plastoquinone + NADPH + (n+1) H(+)(in) = a plastoquinol + NADP(+) + n H(+)(out). Its function is as follows. NDH shuttles electrons from NAD(P)H:plastoquinone, via FMN and iron-sulfur (Fe-S) centers, to quinones in the photosynthetic chain and possibly in a chloroplast respiratory chain. The immediate electron acceptor for the enzyme in this species is believed to be plastoquinone. Couples the redox reaction to proton translocation, and thus conserves the redox energy in a proton gradient. In Pisum sativum (Garden pea), this protein is NAD(P)H-quinone oxidoreductase subunit 5, chloroplastic (ndhF).